Reading from the N-terminus, the 353-residue chain is tRNA pseudouridine synthase B (353 aa).

Residue Asp39 is the Nucleophile of the active site.

It belongs to the pseudouridine synthase TruB family. Type 1 subfamily.

It carries out the reaction uridine(55) in tRNA = pseudouridine(55) in tRNA. In terms of biological role, responsible for synthesis of pseudouridine from uracil-55 in the psi GC loop of transfer RNAs. In Wolbachia pipientis subsp. Culex pipiens (strain wPip), this protein is tRNA pseudouridine synthase B.